Reading from the N-terminus, the 334-residue chain is Probable fructose-bisphosphate aldolase class 1 (334 aa).

The protein belongs to the class I fructose-bisphosphate aldolase family.

The catalysed reaction is beta-D-fructose 1,6-bisphosphate = D-glyceraldehyde 3-phosphate + dihydroxyacetone phosphate. The protein operates within carbohydrate degradation; glycolysis; D-glyceraldehyde 3-phosphate and glycerone phosphate from D-glucose: step 4/4. The sequence is that of Probable fructose-bisphosphate aldolase class 1 from Xylella fastidiosa (strain Temecula1 / ATCC 700964).